The chain runs to 362 residues: MGNTFGHLFRITTFGESHGGGVGVVIDGCPPRLEISESDIQYDLDRRRPGQSKITTPRHESDTCEIISGVFEGKTLGTPIAILVRNKDQRSQDYDEMSVKLRPSHADATYEAKYGIRNWQGGGRSSARETIGRVAAGAIAKKILKQVANVEIIGYVKRIKDLEGMVDPSTVTLENVESNIVRCPDPEMAEKMIDLIDQTRRNKDSIGGVVECVARNIPKGLGQPVFDKLEADLAKGVMSLPASKGFEIGSGFAGTLLTGSEHNDEFYLDETGEIRTTTNRSGGIQGGISNGENIIIRVAFKPTATIGKEQKTVTNTGEETTLAAKGRHDPCVLPRAVPMVEAMVALVLCDHLLRQEGQCGLF.

Arginine 47 provides a ligand contact to NADP(+). Residues 124–126 (RSS), glycine 286, 301–305 (KPTAT), and arginine 327 each bind FMN.

Belongs to the chorismate synthase family. In terms of assembly, homotetramer. Requires FMNH2 as cofactor.

It catalyses the reaction 5-O-(1-carboxyvinyl)-3-phosphoshikimate = chorismate + phosphate. Its pathway is metabolic intermediate biosynthesis; chorismate biosynthesis; chorismate from D-erythrose 4-phosphate and phosphoenolpyruvate: step 7/7. Catalyzes the anti-1,4-elimination of the C-3 phosphate and the C-6 proR hydrogen from 5-enolpyruvylshikimate-3-phosphate (EPSP) to yield chorismate, which is the branch point compound that serves as the starting substrate for the three terminal pathways of aromatic amino acid biosynthesis. This reaction introduces a second double bond into the aromatic ring system. This is Chorismate synthase from Rippkaea orientalis (strain PCC 8801 / RF-1) (Cyanothece sp. (strain PCC 8801)).